A 110-amino-acid chain; its full sequence is Light-harvesting complex-like protein OHP1, chloroplastic (110 aa).

A chloroplast-targeting transit peptide spans 1–41 (MSSSPLSSSLFHPLSTLSTHCHGRRQNLCFNRKQQPFVVRA). Topologically, residues 42–74 (AKLPEGVIVPKAQPKSQPAFLGFTQTAEIWNSR) are stromal. A helical transmembrane segment spans residues 75–95 (ACMIGLIGTFIVELILNKGIL). Residues 96 to 110 (ELIGVEIGKGLDLPL) lie on the Lumenal side of the membrane.

The protein belongs to the ELIP/psbS family. As to quaternary structure, may bind chlorophyll and form dimers in the thylakoid membrane. Component of a high molecular weight complex containing OHP1, OHP2 and HCF244, and PSII core proteins D1/D2, HCF136 and HCF173. Interacts with HCF244. Forms a trimeric complex with OHP2 and HCF244 that mutually stabilizes each subunit. As to expression, mostly expressed in cotyledons and shoot apices.

It localises to the plastid. Its subcellular location is the chloroplast thylakoid membrane. May play a photoprotective role in the thylakoid membrane in response to light stress. Involved in photosystems I (PSI) and II (PSII) core proteins function. Forms a trimeric complex with OHP2 and HCF244 that is required to promote PSII core subunit assembly. The trimeric complex forms a transient PSII reaction center-like complex with PsbA, PsbD, PsbE, PsbF and PsbI subunits in thylakoids for early assembly of PSII as well as PSII repair. The trimeric complex is required for the recruitment of ribosomes to the psbA mRNA during PSII biogenesis and repair. Forms a heterodimer with OHP1 that binds chlorophylls and carotenoids, and that may function in the delivery of pigments to the PsbA subunit of PSII. The sequence is that of Light-harvesting complex-like protein OHP1, chloroplastic from Arabidopsis thaliana (Mouse-ear cress).